The chain runs to 153 residues: Arginine repressor (153 aa).

The protein belongs to the ArgR family.

It localises to the cytoplasm. It participates in amino-acid biosynthesis; L-arginine biosynthesis [regulation]. Regulates arginine biosynthesis genes. The polypeptide is Arginine repressor (Actinobacillus pleuropneumoniae serotype 3 (strain JL03)).